A 451-amino-acid chain; its full sequence is Probable D-serine dehydratase (451 aa).

Lys119 is modified (N6-(pyridoxal phosphate)lysine).

This sequence belongs to the serine/threonine dehydratase family. DsdA subfamily. Pyridoxal 5'-phosphate serves as cofactor.

It catalyses the reaction D-serine = pyruvate + NH4(+). This Acidovorax ebreus (strain TPSY) (Diaphorobacter sp. (strain TPSY)) protein is Probable D-serine dehydratase.